Reading from the N-terminus, the 791-residue chain is FHF complex subunit HOOK-interacting protein 1B (791 aa).

Disordered regions lie at residues 465–510 (APSP…VPRP) and 524–556 (SLGG…SPAE). A Phosphoserine modification is found at S467. A compositionally biased stretch (low complexity) spans 496-510 (SPSVDSSSVVTVPRP). Phosphoserine is present on residues S524, S537, S543, S547, and S679. The span at 541 to 552 (TASPTSSPGRRP) shows a compositional bias: low complexity. A Phosphothreonine modification is found at T708. Residue S716 is modified to Phosphoserine.

This sequence belongs to the FHIP family. As to quaternary structure, component of the FTS/Hook/FHIP complex (FHF complex), composed of AKTIP/FTS, FHIP1B, and one or more members of the Hook family of proteins HOOK1, HOOK2, and HOOK3. The FHF complex associates with the homotypic vesicular sorting complex (the HOPS complex).

Functionally, component of the FTS/Hook/FHIP complex (FHF complex). The FHF complex may function to promote vesicle trafficking and/or fusion via the homotypic vesicular protein sorting complex (the HOPS complex). FHF complex promotes the distribution of AP-4 complex to the perinuclear area of the cell. The chain is FHF complex subunit HOOK-interacting protein 1B (Fhip1b) from Rattus norvegicus (Rat).